A 420-amino-acid polypeptide reads, in one-letter code: Glutamate dehydrogenase (420 aa).

Lys-105 is a catalytic residue. NAD(+) is bound at residue 220-226 (GYGNAGY).

Belongs to the Glu/Leu/Phe/Val dehydrogenases family. In terms of assembly, homohexamer.

It is found in the cytoplasm. It catalyses the reaction L-glutamate + NAD(+) + H2O = 2-oxoglutarate + NH4(+) + NADH + H(+). It carries out the reaction L-glutamate + NADP(+) + H2O = 2-oxoglutarate + NH4(+) + NADPH + H(+). The sequence is that of Glutamate dehydrogenase (gdhA) from Pyrococcus endeavori.